The sequence spans 409 residues: NADH-quinone oxidoreductase subunit D (409 aa).

Belongs to the complex I 49 kDa subunit family. In terms of assembly, NDH-1 is composed of 14 different subunits. Subunits NuoB, C, D, E, F, and G constitute the peripheral sector of the complex.

It localises to the cell inner membrane. The catalysed reaction is a quinone + NADH + 5 H(+)(in) = a quinol + NAD(+) + 4 H(+)(out). NDH-1 shuttles electrons from NADH, via FMN and iron-sulfur (Fe-S) centers, to quinones in the respiratory chain. The immediate electron acceptor for the enzyme in this species is believed to be ubiquinone. Couples the redox reaction to proton translocation (for every two electrons transferred, four hydrogen ions are translocated across the cytoplasmic membrane), and thus conserves the redox energy in a proton gradient. This Helicobacter pylori (strain G27) protein is NADH-quinone oxidoreductase subunit D.